The following is a 681-amino-acid chain: Protein NirI (681 aa).

Residues 1–30 form the signal peptide; sequence MAMPGKSSHAPSRLLLALLTLILLALPARP. A run of 5 helical transmembrane segments spans residues 394–414, 436–456, 468–488, 535–555, and 568–588; these read IPGIAVVAAMLFVLALILFGQ, LVVLGWGLNGQLSVVQVVAFL, FLIEPIIFLIWSAVALGLLFW, TLFVAIVALSFYSMEQALILA, and FLRAWPFVLFALAVLAGGLFI.

The protein to P.stutzeri NosR.

It localises to the cell membrane. The polypeptide is Protein NirI (nirI) (Paracoccus denitrificans (strain Pd 1222)).